The sequence spans 287 residues: ATP synthase gamma chain (287 aa).

The protein belongs to the ATPase gamma chain family. As to quaternary structure, F-type ATPases have 2 components, CF(1) - the catalytic core - and CF(0) - the membrane proton channel. CF(1) has five subunits: alpha(3), beta(3), gamma(1), delta(1), epsilon(1). CF(0) has three main subunits: a, b and c.

The protein resides in the cell membrane. Produces ATP from ADP in the presence of a proton gradient across the membrane. The gamma chain is believed to be important in regulating ATPase activity and the flow of protons through the CF(0) complex. This is ATP synthase gamma chain from Bacillus caldotenax.